The primary structure comprises 217 residues: Dual specificity phosphatase 29 (217 aa).

The Tyrosine-protein phosphatase domain occupies 46-194 (HVNEVWPNLY…LRELDIKLAL (149 aa)). 138–145 (HCAMGRSR) lines the substrate pocket. Residue cysteine 139 is the Phosphocysteine intermediate of the active site.

It belongs to the protein-tyrosine phosphatase family. Non-receptor class dual specificity subfamily.

It localises to the cytoplasm. The protein localises to the nucleus. The enzyme catalyses O-phospho-L-tyrosyl-[protein] + H2O = L-tyrosyl-[protein] + phosphate. It catalyses the reaction O-phospho-L-seryl-[protein] + H2O = L-seryl-[protein] + phosphate. The catalysed reaction is O-phospho-L-threonyl-[protein] + H2O = L-threonyl-[protein] + phosphate. In terms of biological role, dual specificity phosphatase able to dephosphorylate phosphotyrosine, phosphoserine and phosphothreonine residues within the same substrate, with a preference for phosphotyrosine as a substrate. Involved in the modulation of AMPK and MAPK1/2 signaling pathways. This Anolis carolinensis (Green anole) protein is Dual specificity phosphatase 29 (DUSP29).